We begin with the raw amino-acid sequence, 295 residues long: Ribosomal RNA small subunit methyltransferase A (295 aa).

S-adenosyl-L-methionine contacts are provided by asparagine 29, leucine 31, glycine 56, glutamate 77, aspartate 102, and asparagine 128.

It belongs to the class I-like SAM-binding methyltransferase superfamily. rRNA adenine N(6)-methyltransferase family. RsmA subfamily.

Its subcellular location is the cytoplasm. The catalysed reaction is adenosine(1518)/adenosine(1519) in 16S rRNA + 4 S-adenosyl-L-methionine = N(6)-dimethyladenosine(1518)/N(6)-dimethyladenosine(1519) in 16S rRNA + 4 S-adenosyl-L-homocysteine + 4 H(+). Functionally, specifically dimethylates two adjacent adenosines (A1518 and A1519) in the loop of a conserved hairpin near the 3'-end of 16S rRNA in the 30S particle. May play a critical role in biogenesis of 30S subunits. The sequence is that of Ribosomal RNA small subunit methyltransferase A from Listeria monocytogenes serotype 4b (strain CLIP80459).